The primary structure comprises 356 residues: Retinoic acid-induced protein 3 (356 aa).

Over 1–35 (MTTPTTAPSGCRSDLDSRYHRLCDLAEGWGIALET) the chain is Extracellular. The chain crosses the membrane as a helical span at residues 36–56 (LAAVGAVATVACMFALVFLIC). The Cytoplasmic segment spans residues 57–68 (KVQDSNKRKMLP). Residues 69–89 (AQFLFLLGVLGVFGLTFAFII) form a helical membrane-spanning segment. Topologically, residues 90–101 (KLDGATGPTRFF) are extracellular. A helical membrane pass occupies residues 102–122 (LFGVLFAICFSCLLAHAFNLI). Topologically, residues 123–131 (KLVRGRKPL) are cytoplasmic. A helical transmembrane segment spans residues 132-152 (SWLVILSLAVGFSLVQDVIAI). The Extracellular portion of the chain corresponds to 153–178 (EYLVLTMNRTNVNVFSELPAPRRNED). Asn160 carries an N-linked (GlcNAc...) asparagine glycan. Residues 179 to 199 (FVMLLIYVLVLMVLTFFTSFL) form a helical membrane-spanning segment. Residues 200 to 214 (VFCGSFSGWKRHGFH) are Cytoplasmic-facing. Residues 215–235 (ICFTSFLSIAIWVAWIVLLLI) traverse the membrane as a helical segment. The Extracellular portion of the chain corresponds to 236–244 (PDIDRKWDD). The helical transmembrane segment at 245 to 265 (TILSTALVANGWVFLAFYILP) threads the bilayer. Over 266–356 (EFRQLPRQRS…NDYEGRKGDS (91 aa)) the chain is Cytoplasmic. Ser303 carries the phosphoserine modification. A phosphotyrosine mark is found at Tyr318 and Tyr321. The disordered stretch occupies residues 336–356 (IPRAQAPASPYNDYEGRKGDS). Ser344 is subject to Phosphoserine. 2 positions are modified to phosphotyrosine: Tyr346 and Tyr349.

It belongs to the G-protein coupled receptor 3 family. Interacts (via its transmembrane domain) with EGFR. In terms of processing, phosphorylated in two conserved double-tyrosine motifs, Tyr 318/Tyr-321 and Tyr-346/Tyr-349 by EGFR. Tyr-318 and Tyr-321 are the preferred residues responsible for EGFR-mediated GPRC5A phosphorylation. Expressed predominantly in normal fetal and adult lung. Almost undetectable or expressed at very low levels in other tissues.

It is found in the cell membrane. Orphan receptor. Could be involved in modulating differentiation and maintaining homeostasis of epithelial cells. This retinoic acid-inducible GPCR provides evidence for a possible interaction between retinoid and G-protein signaling pathways. Functions as a negative modulator of EGFR signaling. Acts as a lung tumor suppressor. The sequence is that of Retinoic acid-induced protein 3 (Gprc5a) from Mus musculus (Mouse).